The sequence spans 352 residues: Selenide, water dikinase (352 aa).

Cys23 is a catalytic residue. Residues Lys26 and 54–56 contribute to the ATP site; that span reads SRD. Asp57 is a Mg(2+) binding site. ATP is bound by residues Asp74, Asp97, and 145–147; that span reads GHS. A Mg(2+)-binding site is contributed by Asp97. Asp233 contributes to the Mg(2+) binding site.

This sequence belongs to the selenophosphate synthase 1 family. Class I subfamily. Homodimer. It depends on Mg(2+) as a cofactor.

The enzyme catalyses hydrogenselenide + ATP + H2O = selenophosphate + AMP + phosphate + 2 H(+). In terms of biological role, synthesizes selenophosphate from selenide and ATP. The sequence is that of Selenide, water dikinase from Shewanella sp. (strain MR-7).